A 310-amino-acid polypeptide reads, in one-letter code: p-hydroxybenzoic acid efflux pump subunit AaeA (310 aa).

A helical transmembrane segment spans residues 12–32 (AITVVLVILAFIAIFNAWVYY).

It belongs to the membrane fusion protein (MFP) (TC 8.A.1) family.

It localises to the cell inner membrane. Forms an efflux pump with AaeB. The sequence is that of p-hydroxybenzoic acid efflux pump subunit AaeA from Escherichia coli O8 (strain IAI1).